Here is a 369-residue protein sequence, read N- to C-terminus: GTPase Obg (369 aa).

In terms of domain architecture, Obg spans 1-159 (MKFVDEVTID…KNLKLELRVL (159 aa)). The region spanning 160 to 334 (ADVGLLGMPN…LIHAIYSHVA (175 aa)) is the OBG-type G domain. Residues 166–173 (GMPNAGKS), 191–195 (FTTLH), 213–216 (DIPG), 284–287 (NKLD), and 315–317 (SAL) each bind GTP. Residues S173 and T193 each coordinate Mg(2+). The disordered stretch occupies residues 339–369 (QPEEVPDPRFTTNEDLSEAAPAPDRDDPRFR).

It belongs to the TRAFAC class OBG-HflX-like GTPase superfamily. OBG GTPase family. Monomer. Mg(2+) is required as a cofactor.

The protein localises to the cytoplasm. In terms of biological role, an essential GTPase which binds GTP, GDP and possibly (p)ppGpp with moderate affinity, with high nucleotide exchange rates and a fairly low GTP hydrolysis rate. Plays a role in control of the cell cycle, stress response, ribosome biogenesis and in those bacteria that undergo differentiation, in morphogenesis control. The sequence is that of GTPase Obg from Leptothrix cholodnii (strain ATCC 51168 / LMG 8142 / SP-6) (Leptothrix discophora (strain SP-6)).